A 145-amino-acid chain; its full sequence is Cuticle protein 65 (145 aa).

Repeat copies occupy residues 27-30 (AAPA), 33-37 (AAPAV), 39-42 (AAPA), 86-89 (AAPV), 92-95 (AAPA), 98-101 (AAPA), and 123-126 (AAPA).

In terms of biological role, component of the cuticle of migratory locust which contains more than 100 different structural proteins. This Locusta migratoria (Migratory locust) protein is Cuticle protein 65.